A 98-amino-acid polypeptide reads, in one-letter code: NADH-ubiquinone oxidoreductase chain 4L (98 aa).

Helical transmembrane passes span 1–21 (MTPV…GLAF), 29–49 (ALLC…LWAL), and 58–78 (VAPM…LALL).

This sequence belongs to the complex I subunit 4L family.

Its subcellular location is the mitochondrion membrane. The enzyme catalyses a ubiquinone + NADH + 5 H(+)(in) = a ubiquinol + NAD(+) + 4 H(+)(out). In terms of biological role, core subunit of the mitochondrial membrane respiratory chain NADH dehydrogenase (Complex I) which catalyzes electron transfer from NADH through the respiratory chain, using ubiquinone as an electron acceptor. Part of the enzyme membrane arm which is embedded in the lipid bilayer and involved in proton translocation. This Oncorhynchus clarkii (Cutthroat trout) protein is NADH-ubiquinone oxidoreductase chain 4L (MT-ND4L).